We begin with the raw amino-acid sequence, 635 residues long: 3-dehydroshikimate dehydratase (635 aa).

Residues Glu-134, Asp-165, Gln-191, and Glu-239 each contribute to the a divalent metal cation site. VOC domains are found at residues 295-414 (GVEF…LVEQ) and 440-590 (RIDH…VYTE). Residues His-443, His-521, and Glu-599 each contribute to the Mg(2+) site.

It belongs to the bacterial two-domain DSD family. In terms of assembly, homodimer. Co(2+) serves as cofactor. It depends on Ni(2+) as a cofactor. The cofactor is Mg(2+). Requires Mn(2+) as cofactor.

The enzyme catalyses 3-dehydroshikimate = 3,4-dihydroxybenzoate + H2O. It participates in aromatic compound metabolism; 3,4-dihydroxybenzoate biosynthesis. Functionally, catalyzes the conversion of 3-dehydroshikimate to protocatechuate (3,4-dihydroxybenzoate), a common intermediate of quinate and shikimate degradation pathways. The chain is 3-dehydroshikimate dehydratase from Pseudomonas putida (strain ATCC 47054 / DSM 6125 / CFBP 8728 / NCIMB 11950 / KT2440).